A 365-amino-acid chain; its full sequence is IgG receptor FcRn large subunit p51 (365 aa).

Residues 1 to 21 (MGMPLPWALSLLLVLLPQTWG) form the signal peptide. The interval 22–110 (SETRPPLMYH…KTLEKILNGT (89 aa)) is alpha-1. The Extracellular segment spans residues 22–297 (SETRPPLMYH…VDLDSSARSS (276 aa)). 4 N-linked (GlcNAc...) asparagine glycosylation sites follow: N108, N125, N149, and N246. Positions 111–200 (YTLQGLLGCE…ERGRRNLEWK (90 aa)) are alpha-2. Disulfide bonds link C119/C182 and C221/C275. The tract at residues 201 to 290 (EPPSMRLKAR…GLAQPLTVDL (90 aa)) is alpha-3. The Ig-like C1-type domain maps to 202–289 (PPSMRLKARP…EGLAQPLTVD (88 aa)). Residues 291–297 (DSSARSS) are connecting peptide. The chain crosses the membrane as a helical span at residues 298–321 (VPVVGIVLGLLLVVVAIAGGVLLW). Residues 322–365 (GRMRSGLPAPWLSLSGDDSGDLLPGGNLPPEAEPQGANAFPATS) lie on the Cytoplasmic side of the membrane. Position 334 is a phosphoserine (S334). The segment at 343–365 (LLPGGNLPPEAEPQGANAFPATS) is disordered.

Belongs to the immunoglobulin superfamily. FcRn complex consists of two subunits: p51, and p14 which is equivalent to beta-2-microglobulin. It forms an MHC class I-like heterodimer. Interacts with albumin/ALB; this interaction regulates ALB homeostasis. Intestinal epithelium of suckling rodents. Expressed in neonatal intestine and fetal yolk sac.

It is found in the cell membrane. Its subcellular location is the endosome membrane. Cell surface receptor that transfers passive humoral immunity from the mother to the newborn. Binds to the Fc region of monomeric immunoglobulin gamma and mediates its selective uptake from milk. IgG in the milk is bound at the apical surface of the intestinal epithelium. The resultant FcRn-IgG complexes are transcytosed across the intestinal epithelium and IgG is released from FcRn into blood or tissue fluids. Throughout life, contributes to effective humoral immunity by recycling IgG and extending its half-life in the circulation. Mechanistically, monomeric IgG binding to FcRn in acidic endosomes of endothelial and hematopoietic cells recycles IgG to the cell surface where it is released into the circulation. In addition of IgG, regulates homeostasis of the other most abundant circulating protein albumin/ALB. The polypeptide is IgG receptor FcRn large subunit p51 (Fcgrt) (Mus musculus (Mouse)).